The chain runs to 159 residues: SsrA-binding protein (159 aa).

It belongs to the SmpB family.

It is found in the cytoplasm. Required for rescue of stalled ribosomes mediated by trans-translation. Binds to transfer-messenger RNA (tmRNA), required for stable association of tmRNA with ribosomes. tmRNA and SmpB together mimic tRNA shape, replacing the anticodon stem-loop with SmpB. tmRNA is encoded by the ssrA gene; the 2 termini fold to resemble tRNA(Ala) and it encodes a 'tag peptide', a short internal open reading frame. During trans-translation Ala-aminoacylated tmRNA acts like a tRNA, entering the A-site of stalled ribosomes, displacing the stalled mRNA. The ribosome then switches to translate the ORF on the tmRNA; the nascent peptide is terminated with the 'tag peptide' encoded by the tmRNA and targeted for degradation. The ribosome is freed to recommence translation, which seems to be the essential function of trans-translation. The chain is SsrA-binding protein from Salinispora tropica (strain ATCC BAA-916 / DSM 44818 / JCM 13857 / NBRC 105044 / CNB-440).